A 184-amino-acid chain; its full sequence is GMP synthase [glutamine-hydrolyzing] subunit A (184 aa).

A Glutamine amidotransferase type-1 domain is found at 3 to 184 (PLYVVNNHGQ…FENFDGICSE (182 aa)). Cys-75 functions as the Nucleophile in the catalytic mechanism. Catalysis depends on residues His-162 and Glu-164.

In terms of assembly, heterodimer composed of a glutamine amidotransferase subunit (A) and a GMP-binding subunit (B).

It carries out the reaction XMP + L-glutamine + ATP + H2O = GMP + L-glutamate + AMP + diphosphate + 2 H(+). The protein operates within purine metabolism; GMP biosynthesis; GMP from XMP (L-Gln route): step 1/1. In terms of biological role, catalyzes the synthesis of GMP from XMP. This chain is GMP synthase [glutamine-hydrolyzing] subunit A, found in Methanoculleus marisnigri (strain ATCC 35101 / DSM 1498 / JR1).